The primary structure comprises 668 residues: DNA ligase (668 aa).

NAD(+)-binding positions include aspartate 34–aspartate 38, serine 83–leucine 84, and glutamate 114. The active-site N6-AMP-lysine intermediate is the lysine 116. NAD(+) contacts are provided by arginine 137, glutamate 171, lysine 286, and lysine 310. Zn(2+) is bound by residues cysteine 404, cysteine 407, cysteine 422, and cysteine 427. Positions asparagine 588 to glycine 668 constitute a BRCT domain.

This sequence belongs to the NAD-dependent DNA ligase family. LigA subfamily. Mg(2+) is required as a cofactor. The cofactor is Mn(2+).

The catalysed reaction is NAD(+) + (deoxyribonucleotide)n-3'-hydroxyl + 5'-phospho-(deoxyribonucleotide)m = (deoxyribonucleotide)n+m + AMP + beta-nicotinamide D-nucleotide.. Its function is as follows. DNA ligase that catalyzes the formation of phosphodiester linkages between 5'-phosphoryl and 3'-hydroxyl groups in double-stranded DNA using NAD as a coenzyme and as the energy source for the reaction. It is essential for DNA replication and repair of damaged DNA. The sequence is that of DNA ligase from Mycoplasma capricolum subsp. capricolum (strain California kid / ATCC 27343 / NCTC 10154).